Reading from the N-terminus, the 221-residue chain is Membrane protein 0 (221 aa).

The segment at 1–22 (MATVHYSRRPGTPPVTLTSSPG) is disordered. The short motif at 44-47 (PPPY) is the PPXY motif element. A helical transmembrane segment spans residues 100-120 (FLILFGILTLTAVVVAIVAVF).

It belongs to the varicellovirus ORF0 protein family. Interacts with host ITCH; this interaction probably mediates ITCH degradation.

It localises to the host Golgi apparatus membrane. This is Membrane protein 0 from Homo sapiens (Human).